We begin with the raw amino-acid sequence, 613 residues long: Ribosome-associated molecular chaperone SSB1 (613 aa).

The segment at 1–391 (MADGVFQGAI…ILTGQSTNDD (391 aa)) is nucleotide binding domain (NBD). Residues 16–18 (TTY), Lys73, 205–207 (GGT), 271–278 (ERAKRSLS), and Gly342 each bind ATP. Residues 392 to 402 (TKDLLLLDVIP) are inter-domain linker. The tract at residues 403–613 (LSLGVAMQGN…RAVTKGMATR (211 aa)) is substrate binding domain (SBD). The tract at residues 516 to 612 (TEEIEKMISD…KRAVTKGMAT (97 aa)) is lid domain (SBDalpha). The Nuclear export signal signature appears at 574-582 (IEAALSDAL).

It belongs to the heat shock protein 70 family. Ssb-type Hsp70 subfamily. As to quaternary structure, binds to ribosomes. Binds close to the ribosomal tunnel exit via contacts with both ribosomal proteins and rRNA. Directly interacts with nascent polypeptides. This interaction is dependent on the ribosome-associated complex (RAC). Interacts with SSE1. Interacts with FES1.

The protein localises to the cytoplasm. It carries out the reaction ATP + H2O = ADP + phosphate + H(+). In terms of biological role, ribosome-bound, Hsp70-type chaperone that assists in the cotranslational folding of newly synthesized proteins in the cytosol. Stimulates folding by interacting with nascent chains, binding to short, largely hydrophobic sequences exposed by unfolded proteins, thereby stabilizing longer, more slowly translated, and aggregation-prone nascent polypeptides and domains that cannot fold stably until fully synthesized. The Hsp70-protein substrate interaction depends on ATP-binding and on allosteric regulation between the NBD and the SBD. The ATP-bound state is characterized by a fast exchange rate of substrate (low affinity state), while in the ADP-bound state exchange is much slower (high affinity state). During the Hsp70 cycle, the chaperone switches between the ATP-bound state (open conformation) and the ADP-bound state (closed conformation) by major conformational rearrangements involving mainly the lid domain. Ssb cooperates with a specific Hsp40/Hsp70 co-chaperone termed the ribosome-associated complex (RAC), which stimulates the ATPase activity of the ribosome-associated pool of Ssbs and switches it to the high affinity substrate binding state. Hsp110 chaperone SSE1 and FES1 act as nucleotide exchange factors that cause substrate release. The protein is Ribosome-associated molecular chaperone SSB1 (SSB1) of Candida albicans (strain WO-1) (Yeast).